The sequence spans 437 residues: AA9 family lytic polysaccharide monooxygenase H (437 aa).

The signal sequence occupies residues 1 to 21 (MNLSLFTLALVACYSSQLAAA). Residue histidine 22 participates in Cu(2+) binding. Cysteine 64 and cysteine 193 are joined by a disulfide. N-linked (GlcNAc...) asparagine glycosylation is found at asparagine 67 and asparagine 79. Histidine 104 contacts Cu(2+). N-linked (GlcNAc...) asparagine glycosylation is found at asparagine 120 and asparagine 138. Residues histidine 178 and glutamine 188 each contribute to the O2 site. Tyrosine 190 is a binding site for Cu(2+). N-linked (GlcNAc...) asparagine glycosylation is found at asparagine 252 and asparagine 307. Positions 392–437 (DGKCGDGNGQTCKGSLLGECCSQVGYCGSSESYCGVGCQGNFGVCG) constitute a Chitin-binding type-1 domain. 4 cysteine pairs are disulfide-bonded: cysteine 395-cysteine 412, cysteine 403-cysteine 418, cysteine 411-cysteine 425, and cysteine 429-cysteine 436.

Belongs to the polysaccharide monooxygenase AA9 family. Cu(2+) serves as cofactor.

It is found in the secreted. It catalyses the reaction [(1-&gt;4)-beta-D-glucosyl]n+m + reduced acceptor + O2 = 4-dehydro-beta-D-glucosyl-[(1-&gt;4)-beta-D-glucosyl]n-1 + [(1-&gt;4)-beta-D-glucosyl]m + acceptor + H2O.. Functionally, lytic polysaccharide monooxygenase (LPMO) that depolymerizes crystalline and amorphous polysaccharides via the oxidation of scissile alpha- or beta-(1-4)-glycosidic bonds, yielding C1 and C4 oxidation products. Catalysis by LPMOs requires the reduction of the active-site copper from Cu(II) to Cu(I) by a reducing agent and H(2)O(2) or O(2) as a cosubstrate. The protein is AA9 family lytic polysaccharide monooxygenase H of Botryotinia fuckeliana (strain B05.10) (Noble rot fungus).